The following is a 154-amino-acid chain: UPF0039 protein sll0451 (154 aa).

Residues 8-151 (QRFNDISGEA…EHISMIFRVP (144 aa)) form the N-acetyltransferase domain.

This sequence belongs to the UPF0039 (ElaA) family.

This Synechocystis sp. (strain ATCC 27184 / PCC 6803 / Kazusa) protein is UPF0039 protein sll0451.